Consider the following 422-residue polypeptide: G2/mitotic-specific cyclin-A (422 aa).

The tract at residues 1–29 (MSQPFALHHDGENQMQRRGKMNTRSNGLS) is disordered.

The protein belongs to the cyclin family. Cyclin AB subfamily.

Functionally, essential for the control of the cell cycle at the G2/M (mitosis) transition. Interacts with the CDC2 and CDK2 protein kinases to form MPF. G2/M cyclins accumulate steadily during G2 and are abruptly destroyed at mitosis. In Spisula solidissima (Atlantic surf-clam), this protein is G2/mitotic-specific cyclin-A.